The following is a 254-amino-acid chain: Allene oxide cyclase 4, chloroplastic (254 aa).

A chloroplast-targeting transit peptide spans 1-52 (MIMASSAAASISMITLRNLSRNHQSHQSTFLGFSRSFHNQRISSNSPGLSTR).

This sequence belongs to the allene oxide cyclase family. Highly expressed in fully developed leaves.

The protein resides in the plastid. Its subcellular location is the chloroplast. It catalyses the reaction (9Z,13S,15Z)-12,13-epoxyoctadeca-9,11,15-trienoate = (9S,13S,15Z)-12-oxophyto-10,15-dienoate. Involved in the production of 12-oxo-phytodienoic acid (OPDA), a precursor of jasmonic acid. The protein is Allene oxide cyclase 4, chloroplastic (AOC4) of Arabidopsis thaliana (Mouse-ear cress).